Reading from the N-terminus, the 432-residue chain is Adenosylhomocysteinase (432 aa).

The substrate site is built by threonine 57, aspartate 131, and glutamate 156. NAD(+) is bound at residue 157–159 (TTT). Position 183 is a phosphoserine (serine 183). Substrate is bound by residues lysine 186 and aspartate 190. Position 186 is an N6-(2-hydroxyisobutyryl)lysine (lysine 186). Phosphotyrosine is present on tyrosine 193. Residues 222–227 (GDVGKG), glutamate 243, asparagine 248, 299–301 (IGH), asparagine 346, histidine 353, lysine 426, 426–430 (KPDHY), and tyrosine 430 each bind NAD(+).

The protein belongs to the adenosylhomocysteinase family. Homotetramer. Interaction with AHCYL1. NAD(+) is required as a cofactor.

It localises to the cytoplasm. The protein resides in the melanosome. Its subcellular location is the nucleus. It is found in the endoplasmic reticulum. The catalysed reaction is S-adenosyl-L-homocysteine + H2O = L-homocysteine + adenosine. Its pathway is amino-acid biosynthesis; L-homocysteine biosynthesis; L-homocysteine from S-adenosyl-L-homocysteine: step 1/1. Catalyzes the hydrolysis of S-adenosyl-L-homocysteine to form adenosine and homocysteine. Binds copper ions. The polypeptide is Adenosylhomocysteinase (Ahcy) (Rattus norvegicus (Rat)).